The chain runs to 93 residues: Pyrimidine/purine nucleoside phosphorylase (93 aa).

This sequence belongs to the nucleoside phosphorylase PpnP family.

It carries out the reaction a purine D-ribonucleoside + phosphate = a purine nucleobase + alpha-D-ribose 1-phosphate. The catalysed reaction is adenosine + phosphate = alpha-D-ribose 1-phosphate + adenine. It catalyses the reaction cytidine + phosphate = cytosine + alpha-D-ribose 1-phosphate. The enzyme catalyses guanosine + phosphate = alpha-D-ribose 1-phosphate + guanine. It carries out the reaction inosine + phosphate = alpha-D-ribose 1-phosphate + hypoxanthine. The catalysed reaction is thymidine + phosphate = 2-deoxy-alpha-D-ribose 1-phosphate + thymine. It catalyses the reaction uridine + phosphate = alpha-D-ribose 1-phosphate + uracil. The enzyme catalyses xanthosine + phosphate = alpha-D-ribose 1-phosphate + xanthine. In terms of biological role, catalyzes the phosphorolysis of diverse nucleosides, yielding D-ribose 1-phosphate and the respective free bases. Can use uridine, adenosine, guanosine, cytidine, thymidine, inosine and xanthosine as substrates. Also catalyzes the reverse reactions. The sequence is that of Pyrimidine/purine nucleoside phosphorylase from Pseudomonas syringae pv. tomato (strain ATCC BAA-871 / DC3000).